The following is a 170-amino-acid chain: E1B protein, small T-antigen (170 aa).

Belongs to the adenoviridae E1B 19 kDa protein family.

The polypeptide is E1B protein, small T-antigen (Canine adenovirus serotype 2 (CAdV-2)).